Reading from the N-terminus, the 180-residue chain is Thiol:disulfide interchange protein TxlA homolog (180 aa).

A helical membrane pass occupies residues 10-26 (LLAVVAIALSAAVYLGF). The 110-residue stretch at 34–143 (SLEAQAQRAI…LEQNITALVA (110 aa)) folds into the Thioredoxin domain. Cys-64 and Cys-67 are oxidised to a cystine.

The protein belongs to the thioredoxin family.

The protein localises to the cell membrane. Its function is as follows. Required for disulfide bond formation in some proteins. Acts by transferring its disulfide bond to other proteins and is reduced in the process. The sequence is that of Thiol:disulfide interchange protein TxlA homolog (txlA) from Synechocystis sp. (strain ATCC 27184 / PCC 6803 / Kazusa).